The primary structure comprises 125 residues: Fluoride-specific ion channel FluC (125 aa).

A run of 4 helical transmembrane segments spans residues 5–25, 37–57, 71–91, and 97–117; these read ILAI…LALW, LAAN…FHLL, GFLG…TMLL, and VALL…WLGI. Na(+) contacts are provided by glycine 74 and threonine 77.

It belongs to the fluoride channel Fluc/FEX (TC 1.A.43) family.

Its subcellular location is the cell inner membrane. The enzyme catalyses fluoride(in) = fluoride(out). Its activity is regulated as follows. Na(+) is not transported, but it plays an essential structural role and its presence is essential for fluoride channel function. Its function is as follows. Fluoride-specific ion channel. Important for reducing fluoride concentration in the cell, thus reducing its toxicity. The polypeptide is Fluoride-specific ion channel FluC (Variovorax paradoxus (strain S110)).